Here is a 292-residue protein sequence, read N- to C-terminus: Transcription antiterminator LacT (292 aa).

PRD domains are found at residues 66–170 (NIPI…DDGE) and 172–284 (VFGK…APAQ).

This sequence belongs to the transcriptional antiterminator BglG family.

In terms of biological role, mediates positive regulation of the lac operon by functioning as an antiterminator factor of transcription. The polypeptide is Transcription antiterminator LacT (lacT) (Lacticaseibacillus casei (Lactobacillus casei)).